The chain runs to 333 residues: DNA-directed RNA polymerase subunit alpha (333 aa).

The interval 1–234 is alpha N-terminal domain (alpha-NTD); it reads MQISVNEFLT…QQLAAFVDLK (234 aa). Positions 248–333 are alpha C-terminal domain (alpha-CTD); it reads IDPILLRPVD…SLKKDDKATA (86 aa).

Belongs to the RNA polymerase alpha chain family. In terms of assembly, homodimer. The RNAP catalytic core consists of 2 alpha, 1 beta, 1 beta' and 1 omega subunit. When a sigma factor is associated with the core the holoenzyme is formed, which can initiate transcription.

The catalysed reaction is RNA(n) + a ribonucleoside 5'-triphosphate = RNA(n+1) + diphosphate. In terms of biological role, DNA-dependent RNA polymerase catalyzes the transcription of DNA into RNA using the four ribonucleoside triphosphates as substrates. This is DNA-directed RNA polymerase subunit alpha from Pseudomonas entomophila (strain L48).